We begin with the raw amino-acid sequence, 164 residues long: ATP synthase subunit b (164 aa).

The helical transmembrane segment at 5-25 (IGELIGNFILVAGSFLLLIVL) threads the bilayer.

Belongs to the ATPase B chain family. F-type ATPases have 2 components, F(1) - the catalytic core - and F(0) - the membrane proton channel. F(1) has five subunits: alpha(3), beta(3), gamma(1), delta(1), epsilon(1). F(0) has three main subunits: a(1), b(2) and c(10-14). The alpha and beta chains form an alternating ring which encloses part of the gamma chain. F(1) is attached to F(0) by a central stalk formed by the gamma and epsilon chains, while a peripheral stalk is formed by the delta and b chains.

The protein resides in the cell membrane. Its function is as follows. F(1)F(0) ATP synthase produces ATP from ADP in the presence of a proton or sodium gradient. F-type ATPases consist of two structural domains, F(1) containing the extramembraneous catalytic core and F(0) containing the membrane proton channel, linked together by a central stalk and a peripheral stalk. During catalysis, ATP synthesis in the catalytic domain of F(1) is coupled via a rotary mechanism of the central stalk subunits to proton translocation. In terms of biological role, component of the F(0) channel, it forms part of the peripheral stalk, linking F(1) to F(0). The sequence is that of ATP synthase subunit b from Streptococcus gordonii (strain Challis / ATCC 35105 / BCRC 15272 / CH1 / DL1 / V288).